Reading from the N-terminus, the 126-residue chain is Small ribosomal subunit protein uS12 (126 aa).

The disordered stretch occupies residues 1–28 (MPTINQLVRKGRRKVRTKSKSPALDGNP). The segment covering 9 to 19 (RKGRRKVRTKS) has biased composition (basic residues). Residue D89 is modified to 3-methylthioaspartic acid. A disordered region spans residues 106-126 (GVEKRRRSRSKYGVKRPKAAK). A compositionally biased stretch (basic residues) spans 109–126 (KRRRSRSKYGVKRPKAAK).

The protein belongs to the universal ribosomal protein uS12 family. As to quaternary structure, part of the 30S ribosomal subunit. Contacts proteins S8 and S17. May interact with IF1 in the 30S initiation complex.

Functionally, with S4 and S5 plays an important role in translational accuracy. In terms of biological role, interacts with and stabilizes bases of the 16S rRNA that are involved in tRNA selection in the A site and with the mRNA backbone. Located at the interface of the 30S and 50S subunits, it traverses the body of the 30S subunit contacting proteins on the other side and probably holding the rRNA structure together. The combined cluster of proteins S8, S12 and S17 appears to hold together the shoulder and platform of the 30S subunit. In Opitutus terrae (strain DSM 11246 / JCM 15787 / PB90-1), this protein is Small ribosomal subunit protein uS12.